Here is a 232-residue protein sequence, read N- to C-terminus: Ribonuclease 3 (232 aa).

The 134-residue stretch at 2–135 folds into the RNase III domain; that stretch reads IKALEDDLSQ…FIGALYLDQG (134 aa). Glu-48 is a Mg(2+) binding site. Asp-52 is an active-site residue. Asp-121 and Glu-124 together coordinate Mg(2+). Glu-124 is an active-site residue. A DRBM domain is found at 161–230; it reads DHKSELQELL…ANQALQLLRR (70 aa).

This sequence belongs to the ribonuclease III family. As to quaternary structure, homodimer. The cofactor is Mg(2+).

It localises to the cytoplasm. It catalyses the reaction Endonucleolytic cleavage to 5'-phosphomonoester.. In terms of biological role, digests double-stranded RNA. Involved in the processing of primary rRNA transcript to yield the immediate precursors to the large and small rRNAs (23S and 16S). Processes some mRNAs, and tRNAs when they are encoded in the rRNA operon. Processes pre-crRNA and tracrRNA of type II CRISPR loci if present in the organism. The chain is Ribonuclease 3 from Pediococcus pentosaceus (strain ATCC 25745 / CCUG 21536 / LMG 10740 / 183-1w).